We begin with the raw amino-acid sequence, 126 residues long: C-type natriuretic peptide (126 aa).

An N-terminal signal peptide occupies residues methionine 1 to alanine 23. Residues proline 20 to leucine 71 form a disordered region. The propeptide occupies lysine 24–arginine 73. Positions alanine 46–alanine 62 are enriched in gly residues. A disulfide bridge connects residues cysteine 110 and cysteine 126.

The protein belongs to the natriuretic peptide family. Degraded by IDE (in vitro).

The protein localises to the secreted. Functionally, hormone which plays a role in endochondral ossification through regulation of cartilaginous growth plate chondrocytes proliferation and differentiation. May also be vasoactive and natriuretic. Acts by specifically binding and stimulating NPR2 to produce cGMP. Binds the clearance receptor NPR3. In Bos taurus (Bovine), this protein is C-type natriuretic peptide (NPPC).